A 397-amino-acid chain; its full sequence is Argininosuccinate synthase (397 aa).

8–16 (AYSGGLDTS) contributes to the ATP binding site. Tyr87 provides a ligand contact to L-citrulline. Gly117 lines the ATP pocket. 3 residues coordinate L-aspartate: Thr119, Asn123, and Asp124. Residue Asn123 coordinates L-citrulline. L-citrulline-binding residues include Arg127, Ser175, Glu259, and Tyr271.

The protein belongs to the argininosuccinate synthase family. Type 1 subfamily. Homotetramer.

Its subcellular location is the cytoplasm. The catalysed reaction is L-citrulline + L-aspartate + ATP = 2-(N(omega)-L-arginino)succinate + AMP + diphosphate + H(+). It participates in amino-acid biosynthesis; L-arginine biosynthesis; L-arginine from L-ornithine and carbamoyl phosphate: step 2/3. This is Argininosuccinate synthase from Streptomyces griseus subsp. griseus (strain JCM 4626 / CBS 651.72 / NBRC 13350 / KCC S-0626 / ISP 5235).